The primary structure comprises 891 residues: Genome polyprotein 2 (891 aa).

In terms of domain architecture, Peptidase C6 spans 109-229 (TAEFKSGFCY…GCEYMLYPVG (121 aa)). Active-site for helper component proteinase activity residues include Cys117 and His189. The disordered stretch occupies residues 502–540 (WVTLDSGDEDDDHSGGGGGGPQTPGGQPPASPAHRTHQS).

Belongs to the bymoviruses polyprotein 2 family. Post-translationally, the viral RNA2 of bymoviruses is expressed as a single polyprotein which undergoes post-translational proteolytic processing resulting in the production of at least two individual proteins. The HC-pro cleaves its C-terminus autocatalytically (Potential).

The catalysed reaction is Hydrolyzes a Gly-|-Gly bond at its own C-terminus, commonly in the sequence -Tyr-Xaa-Val-Gly-|-Gly, in the processing of the potyviral polyprotein.. In Hordeum vulgare (Barley), this protein is Genome polyprotein 2 (RNA2).